The primary structure comprises 176 residues: Cytochrome b (176 aa).

3 helical membrane passes run 33 to 53 (FGSL…FLAM), 77 to 98 (WVLR…YLHV), and 113 to 133 (WNMG…GYVL). Heme b-binding residues include histidine 83 and histidine 97.

Belongs to the cytochrome b family. The cytochrome bc1 complex contains 11 subunits: 3 respiratory subunits (MT-CYB, CYC1 and UQCRFS1), 2 core proteins (UQCRC1 and UQCRC2) and 6 low-molecular weight proteins (UQCRH/QCR6, UQCRB/QCR7, UQCRQ/QCR8, UQCR10/QCR9, UQCR11/QCR10 and a cleavage product of UQCRFS1). This cytochrome bc1 complex then forms a dimer. Requires heme b as cofactor.

The protein localises to the mitochondrion inner membrane. Component of the ubiquinol-cytochrome c reductase complex (complex III or cytochrome b-c1 complex) that is part of the mitochondrial respiratory chain. The b-c1 complex mediates electron transfer from ubiquinol to cytochrome c. Contributes to the generation of a proton gradient across the mitochondrial membrane that is then used for ATP synthesis. The polypeptide is Cytochrome b (MT-CYB) (Nycticeius humeralis (Evening bat)).